The sequence spans 160 residues: Coat protein TP3 (160 aa).

The protein resides in the virion. The protein is Coat protein TP3 of Thermoproteus tenax (TTV1).